We begin with the raw amino-acid sequence, 359 residues long: 5-amino-6-(D-ribitylamino)uracil--L-tyrosine 4-hydroxyphenyl transferase (359 aa).

The 238-residue stretch at valine 45–lysine 282 folds into the Radical SAM core domain. Residues cysteine 59, cysteine 63, and cysteine 66 each contribute to the [4Fe-4S] cluster site.

The protein belongs to the radical SAM superfamily. CofH family. Consists of two subunits, CofG and CofH. Requires [4Fe-4S] cluster as cofactor.

It catalyses the reaction 5-amino-6-(D-ribitylamino)uracil + L-tyrosine + S-adenosyl-L-methionine = 5-amino-5-(4-hydroxybenzyl)-6-(D-ribitylimino)-5,6-dihydrouracil + 2-iminoacetate + 5'-deoxyadenosine + L-methionine + H(+). It participates in cofactor biosynthesis; coenzyme F0 biosynthesis. Functionally, catalyzes the radical-mediated synthesis of 5-amino-5-(4-hydroxybenzyl)-6-(D-ribitylimino)-5,6-dihydrouracil from 5-amino-6-(D-ribitylamino)uracil and L-tyrosine. This chain is 5-amino-6-(D-ribitylamino)uracil--L-tyrosine 4-hydroxyphenyl transferase, found in Methanococcus maripaludis (strain C5 / ATCC BAA-1333).